The chain runs to 1376 residues: Protein FAM135B (1376 aa).

Acidic residues predominate over residues 431–442; the sequence is NEDECEFSEESP. The interval 431–489 is disordered; that stretch reads NEDECEFSEESPSENTHVGSKPHSIQSTTVHENASFEKPNVGTKAQEDCSTEGPEQGFD. The span at 443–462 shows a compositional bias: polar residues; sequence SENTHVGSKPHSIQSTTVHE.

It belongs to the FAM135 family.

This chain is Protein FAM135B (fam135b), found in Xenopus laevis (African clawed frog).